Reading from the N-terminus, the 187-residue chain is Translation initiation factor IF-3 (187 aa).

It belongs to the IF-3 family. Monomer.

It is found in the cytoplasm. IF-3 binds to the 30S ribosomal subunit and shifts the equilibrium between 70S ribosomes and their 50S and 30S subunits in favor of the free subunits, thus enhancing the availability of 30S subunits on which protein synthesis initiation begins. This Leptospira biflexa serovar Patoc (strain Patoc 1 / Ames) protein is Translation initiation factor IF-3.